The primary structure comprises 343 residues: Aspartate carbamoyltransferase catalytic subunit (343 aa).

Residues arginine 71 and threonine 72 each contribute to the carbamoyl phosphate site. Position 99 (lysine 99) interacts with L-aspartate. Carbamoyl phosphate-binding residues include arginine 121, histidine 149, and glutamine 152. Residues arginine 195 and arginine 249 each coordinate L-aspartate. Carbamoyl phosphate-binding residues include glycine 290 and proline 291.

Belongs to the aspartate/ornithine carbamoyltransferase superfamily. ATCase family. In terms of assembly, heterododecamer (2C3:3R2) of six catalytic PyrB chains organized as two trimers (C3), and six regulatory PyrI chains organized as three dimers (R2).

The catalysed reaction is carbamoyl phosphate + L-aspartate = N-carbamoyl-L-aspartate + phosphate + H(+). Its pathway is pyrimidine metabolism; UMP biosynthesis via de novo pathway; (S)-dihydroorotate from bicarbonate: step 2/3. Its function is as follows. Catalyzes the condensation of carbamoyl phosphate and aspartate to form carbamoyl aspartate and inorganic phosphate, the committed step in the de novo pyrimidine nucleotide biosynthesis pathway. This is Aspartate carbamoyltransferase catalytic subunit from Rhodopirellula baltica (strain DSM 10527 / NCIMB 13988 / SH1).